A 231-amino-acid polypeptide reads, in one-letter code: Orotidine 5'-phosphate decarboxylase (231 aa).

Residues aspartate 11, lysine 33, 60-69, threonine 120, arginine 181, glutamine 190, glycine 210, and arginine 211 each bind substrate; that span reads DLKFHDIPNT. Residue lysine 62 is the Proton donor of the active site.

It belongs to the OMP decarboxylase family. Type 1 subfamily. As to quaternary structure, homodimer.

The enzyme catalyses orotidine 5'-phosphate + H(+) = UMP + CO2. It participates in pyrimidine metabolism; UMP biosynthesis via de novo pathway; UMP from orotate: step 2/2. Catalyzes the decarboxylation of orotidine 5'-monophosphate (OMP) to uridine 5'-monophosphate (UMP). In Vibrio cholerae serotype O1 (strain ATCC 39315 / El Tor Inaba N16961), this protein is Orotidine 5'-phosphate decarboxylase.